A 352-amino-acid polypeptide reads, in one-letter code: Protein TIFY 6B (352 aa).

The tract at residues 1-71 is disordered; the sequence is MERDFLGLGS…KSGNYHLPHS (71 aa). Positions 17–26 are enriched in basic and acidic residues; the sequence is VKEETSESSR. Positions 34–54 are enriched in polar residues; that stretch reads MNWSFSNKVSASSSQFLSFRP. The Tify domain maps to 172–207; it reads PIGSPAQLTIFYAGSVCVYDDISPEKAKAIMLLAGN. The short motif at 302–326 is the Jas element; the sequence is PLARKASLARFLEKRKERVTSVSPY. Residues 304 to 311 carry the Nuclear localization signal motif; it reads ARKASLAR.

This sequence belongs to the TIFY/JAZ family. Homo- and heterodimer. Interacts with COI1, MYC2, MYC3, MYC4, TIFY10A/JAZ1, TIFY10B/JAZ2, TIFY6A/JAZ4, TIFY5A/JAZ8, TIFY7/JAZ9, TIFY9/JAZ10 and TIFY3A/JAZ11. Interacts (via TIFY domain) with AFPH2/NINJA. Ubiquitinated. Targeted for degradation by the SCF(COI1) E3 ubiquitin ligase-proteasome pathway during jasmonate signaling. In terms of tissue distribution, srtongly expressed in root tips.

The protein localises to the nucleus. Repressor of jasmonate responses. Jasmonoyl-isoleucine (JA-Ile) specifically promotes COI1-TIFY6B/JAZ3 interaction. Acts as a negative regulator of MYC2 function. Feed-back regulated by MYC2. This Arabidopsis thaliana (Mouse-ear cress) protein is Protein TIFY 6B (TIFY6B).